Consider the following 491-residue polypeptide: Inositol-pentakisphosphate 2-kinase (491 aa).

Residues Glu-136 to Lys-140 carry the EXKPK motif motif. Ser-282 is modified (phosphoserine).

The protein belongs to the IPK1 type 2 family. As to expression, ubiquitously expressed, with high expression in heart, brain, testis and placenta.

It localises to the cytoplasm. The protein resides in the nucleus. It catalyses the reaction 1D-myo-inositol 1,3,4,5,6-pentakisphosphate + ATP = 1D-myo-inositol hexakisphosphate + ADP + H(+). Phosphorylates Ins(1,3,4,5,6)P5 at position 2 to form Ins(1,2,3,4,5,6)P6 (InsP6 or phytate). InsP6 is involved in many processes such as mRNA export, non-homologous end-joining, endocytosis, ion channel regulation. It also protects cells from TNF-alpha-induced apoptosis. The chain is Inositol-pentakisphosphate 2-kinase (IPPK) from Homo sapiens (Human).